Reading from the N-terminus, the 476-residue chain is Bifunctional protein GlmU (476 aa).

Residues 1-235 form a pyrophosphorylase region; the sequence is MTALDIIIMA…ALQVAGVNSP (235 aa). Residues K23, Q81, 86-87, 108-110, G145, E160, and N233 each bind UDP-N-acetyl-alpha-D-glucosamine; these read GT and SGD. D110 contacts Mg(2+). N233 serves as a coordination point for Mg(2+). Residues 236 to 256 form a linker region; it reads AQLADLERAHQRAQAAALMEQ. The tract at residues 257–476 is N-acetyltransferase; the sequence is GVRLADPARF…WKRPAKQAKG (220 aa). Residues R351 and K369 each coordinate UDP-N-acetyl-alpha-D-glucosamine. H381 serves as the catalytic Proton acceptor. UDP-N-acetyl-alpha-D-glucosamine is bound by residues Y384 and N395. Residues A398, 404-405, S423, G441, and R458 each bind acetyl-CoA; that span reads NY.

The protein in the N-terminal section; belongs to the N-acetylglucosamine-1-phosphate uridyltransferase family. In the C-terminal section; belongs to the transferase hexapeptide repeat family. Homotrimer. Mg(2+) serves as cofactor.

The protein resides in the cytoplasm. The enzyme catalyses alpha-D-glucosamine 1-phosphate + acetyl-CoA = N-acetyl-alpha-D-glucosamine 1-phosphate + CoA + H(+). The catalysed reaction is N-acetyl-alpha-D-glucosamine 1-phosphate + UTP + H(+) = UDP-N-acetyl-alpha-D-glucosamine + diphosphate. It participates in nucleotide-sugar biosynthesis; UDP-N-acetyl-alpha-D-glucosamine biosynthesis; N-acetyl-alpha-D-glucosamine 1-phosphate from alpha-D-glucosamine 6-phosphate (route II): step 2/2. Its pathway is nucleotide-sugar biosynthesis; UDP-N-acetyl-alpha-D-glucosamine biosynthesis; UDP-N-acetyl-alpha-D-glucosamine from N-acetyl-alpha-D-glucosamine 1-phosphate: step 1/1. The protein operates within bacterial outer membrane biogenesis; LPS lipid A biosynthesis. Catalyzes the last two sequential reactions in the de novo biosynthetic pathway for UDP-N-acetylglucosamine (UDP-GlcNAc). The C-terminal domain catalyzes the transfer of acetyl group from acetyl coenzyme A to glucosamine-1-phosphate (GlcN-1-P) to produce N-acetylglucosamine-1-phosphate (GlcNAc-1-P), which is converted into UDP-GlcNAc by the transfer of uridine 5-monophosphate (from uridine 5-triphosphate), a reaction catalyzed by the N-terminal domain. This Acidovorax sp. (strain JS42) protein is Bifunctional protein GlmU.